A 450-amino-acid polypeptide reads, in one-letter code: Signal recognition particle protein (450 aa).

GTP-binding positions include 107–114 (GLQGSGKT), 190–194 (DTAGR), and 248–251 (TKTD).

This sequence belongs to the GTP-binding SRP family. SRP54 subfamily. Part of the signal recognition particle protein translocation system, which is composed of SRP and FtsY. SRP is a ribonucleoprotein composed of Ffh and a 4.5S RNA molecule.

The protein localises to the cytoplasm. It carries out the reaction GTP + H2O = GDP + phosphate + H(+). Its function is as follows. Involved in targeting and insertion of nascent membrane proteins into the cytoplasmic membrane. Binds to the hydrophobic signal sequence of the ribosome-nascent chain (RNC) as it emerges from the ribosomes. The SRP-RNC complex is then targeted to the cytoplasmic membrane where it interacts with the SRP receptor FtsY. Interaction with FtsY leads to the transfer of the RNC complex to the Sec translocase for insertion into the membrane, the hydrolysis of GTP by both Ffh and FtsY, and the dissociation of the SRP-FtsY complex into the individual components. The chain is Signal recognition particle protein from Buchnera aphidicola subsp. Baizongia pistaciae (strain Bp).